A 166-amino-acid polypeptide reads, in one-letter code: MDKLINDFSFGLFFWQALILVILILLLVKFAWKPIMESITAREEGIKNALLSAENAKREMENLQADNQRILNEARAERDAMLKEAREMKEKMIADSKNEAQEAGQKMIEQAKAAIESEKNAAMAELKSQVSTLSLSIAEKLLKEELSNKESQTKLVEKMLGDVKLN.

A helical transmembrane segment spans residues 8-28 (FSFGLFFWQALILVILILLLV).

Belongs to the ATPase B chain family. F-type ATPases have 2 components, F(1) - the catalytic core - and F(0) - the membrane proton channel. F(1) has five subunits: alpha(3), beta(3), gamma(1), delta(1), epsilon(1). F(0) has three main subunits: a(1), b(2) and c(10-14). The alpha and beta chains form an alternating ring which encloses part of the gamma chain. F(1) is attached to F(0) by a central stalk formed by the gamma and epsilon chains, while a peripheral stalk is formed by the delta and b chains.

It is found in the cell inner membrane. In terms of biological role, f(1)F(0) ATP synthase produces ATP from ADP in the presence of a proton or sodium gradient. F-type ATPases consist of two structural domains, F(1) containing the extramembraneous catalytic core and F(0) containing the membrane proton channel, linked together by a central stalk and a peripheral stalk. During catalysis, ATP synthesis in the catalytic domain of F(1) is coupled via a rotary mechanism of the central stalk subunits to proton translocation. Functionally, component of the F(0) channel, it forms part of the peripheral stalk, linking F(1) to F(0). The chain is ATP synthase subunit b from Flavobacterium johnsoniae (strain ATCC 17061 / DSM 2064 / JCM 8514 / BCRC 14874 / CCUG 350202 / NBRC 14942 / NCIMB 11054 / UW101) (Cytophaga johnsonae).